Here is a 249-residue protein sequence, read N- to C-terminus: 3-deoxy-D-manno-octulosonic acid kinase (249 aa).

Aspartate 175 is an active-site residue.

This sequence belongs to the protein kinase superfamily. KdkA/RfaP family.

It localises to the cell inner membrane. The enzyme catalyses an alpha-Kdo-(2-&gt;6)-lipid IVA + ATP = a 4-O-phospho-alpha-Kdo-(2-&gt;6)-lipid IVA + ADP + H(+). It participates in bacterial outer membrane biogenesis; LPS core biosynthesis. Functionally, catalyzes the ATP-dependent phosphorylation of the 3-deoxy-D-manno-octulosonic acid (Kdo) residue in Kdo-lipid IV(A) at the 4-OH position. This chain is 3-deoxy-D-manno-octulosonic acid kinase, found in Xanthomonas euvesicatoria pv. vesicatoria (strain 85-10) (Xanthomonas campestris pv. vesicatoria).